The primary structure comprises 273 residues: Shikimate dehydrogenase (NADP(+)) (273 aa).

Residues 15–17 (SKS) and Thr-62 contribute to the shikimate site. The active-site Proton acceptor is Lys-66. NADP(+) is bound at residue Asp-78. Positions 87 and 103 each coordinate shikimate. Residues 127 to 131 (GAGGA), 150 to 155 (NRTYAR), and Met-214 contribute to the NADP(+) site. Tyr-216 lines the shikimate pocket. Residue Gly-238 coordinates NADP(+).

The protein belongs to the shikimate dehydrogenase family. Homodimer.

It carries out the reaction shikimate + NADP(+) = 3-dehydroshikimate + NADPH + H(+). It participates in metabolic intermediate biosynthesis; chorismate biosynthesis; chorismate from D-erythrose 4-phosphate and phosphoenolpyruvate: step 4/7. In terms of biological role, involved in the biosynthesis of the chorismate, which leads to the biosynthesis of aromatic amino acids. Catalyzes the reversible NADPH linked reduction of 3-dehydroshikimate (DHSA) to yield shikimate (SA). This is Shikimate dehydrogenase (NADP(+)) from Yersinia enterocolitica serotype O:8 / biotype 1B (strain NCTC 13174 / 8081).